Consider the following 53-residue polypeptide: MQEMVGYLIKYPNVLREVMEGNACLLGVDKDQSECIINGFKGLEIYSMLDWKY.

Positions 1–46 are excised as a propeptide; the sequence is MQEMVGYLIKYPNVLREVMEGNACLLGVDKDQSECIINGFKGLEIY. W51 carries 3'-geranyl-2',N2-cyclotryptophan lipidation.

As to quaternary structure, interacts directly with the sensor histidine kinase ComP and stimulates its activity. In terms of processing, trp-51 is modified by geranylation, which is essential for activity. Modified by the tryptophan prenyltransferase ComQ before export to the extracellular environment. The type of isoprenyl derivative differs among the different pherotypes and depends on ComX primary sequence.

It is found in the secreted. In terms of biological role, part of a major quorum-sensing system that regulates the development of genetic competence. Acts through the activation of the two-component regulatory system ComP/ComA composed of a sensor histidine kinase, ComP, and a response regulator, ComA. In Bacillus mojavensis, this protein is ComX pheromone.